The following is a 463-amino-acid chain: Siroheme synthase 1 (463 aa).

Residues 1 to 203 (MDFLPLFCQL…GQQQAAEESV (203 aa)) form a precorrin-2 dehydrogenase /sirohydrochlorin ferrochelatase region. NAD(+)-binding positions include 22–23 (EV) and 43–44 (PH). Ser128 bears the Phosphoserine mark. The tract at residues 215 to 463 (GSVTLVGAGP…YGEANTLAGV (249 aa)) is uroporphyrinogen-III C-methyltransferase. S-adenosyl-L-methionine is bound at residue Pro224. Asp247 (proton acceptor) is an active-site residue. The active-site Proton donor is the Lys269. S-adenosyl-L-methionine contacts are provided by residues 300–302 (GGD), Ile305, 330–331 (TA), Met382, and Gly411.

In the N-terminal section; belongs to the precorrin-2 dehydrogenase / sirohydrochlorin ferrochelatase family. It in the C-terminal section; belongs to the precorrin methyltransferase family.

It carries out the reaction uroporphyrinogen III + 2 S-adenosyl-L-methionine = precorrin-2 + 2 S-adenosyl-L-homocysteine + H(+). It catalyses the reaction precorrin-2 + NAD(+) = sirohydrochlorin + NADH + 2 H(+). The enzyme catalyses siroheme + 2 H(+) = sirohydrochlorin + Fe(2+). It participates in cofactor biosynthesis; adenosylcobalamin biosynthesis; precorrin-2 from uroporphyrinogen III: step 1/1. It functions in the pathway cofactor biosynthesis; adenosylcobalamin biosynthesis; sirohydrochlorin from precorrin-2: step 1/1. The protein operates within porphyrin-containing compound metabolism; siroheme biosynthesis; precorrin-2 from uroporphyrinogen III: step 1/1. Its pathway is porphyrin-containing compound metabolism; siroheme biosynthesis; siroheme from sirohydrochlorin: step 1/1. It participates in porphyrin-containing compound metabolism; siroheme biosynthesis; sirohydrochlorin from precorrin-2: step 1/1. Functionally, multifunctional enzyme that catalyzes the SAM-dependent methylations of uroporphyrinogen III at position C-2 and C-7 to form precorrin-2 via precorrin-1. Then it catalyzes the NAD-dependent ring dehydrogenation of precorrin-2 to yield sirohydrochlorin. Finally, it catalyzes the ferrochelation of sirohydrochlorin to yield siroheme. This chain is Siroheme synthase 1, found in Aeromonas hydrophila subsp. hydrophila (strain ATCC 7966 / DSM 30187 / BCRC 13018 / CCUG 14551 / JCM 1027 / KCTC 2358 / NCIMB 9240 / NCTC 8049).